The following is a 147-amino-acid chain: 3-hydroxyacyl-[acyl-carrier-protein] dehydratase FabZ (147 aa).

Residue His-53 is part of the active site.

This sequence belongs to the thioester dehydratase family. FabZ subfamily.

It localises to the cytoplasm. It catalyses the reaction a (3R)-hydroxyacyl-[ACP] = a (2E)-enoyl-[ACP] + H2O. Its function is as follows. Involved in unsaturated fatty acids biosynthesis. Catalyzes the dehydration of short chain beta-hydroxyacyl-ACPs and long chain saturated and unsaturated beta-hydroxyacyl-ACPs. The polypeptide is 3-hydroxyacyl-[acyl-carrier-protein] dehydratase FabZ (Synechococcus sp. (strain WH7803)).